The sequence spans 458 residues: Bifunctional protein GlmU (458 aa).

Residues 1-228 are pyrophosphorylase; the sequence is MHPKLDILIL…DWEVLGVNSK (228 aa). UDP-N-acetyl-alpha-D-glucosamine is bound by residues 10-13, lysine 24, glutamine 75, 80-81, 102-104, glycine 139, glutamate 153, asparagine 168, and asparagine 226; these read LAAG, GT, and YGD. Position 104 (aspartate 104) interacts with Mg(2+). Asparagine 226 contacts Mg(2+). A linker region spans residues 229–249; the sequence is AQLAELERIHQNEVAQRLLAD. An N-acetyltransferase region spans residues 250–458; that stretch reads GVTLMDPARL…KRPIKPKKEG (209 aa). Residues arginine 332 and lysine 350 each contribute to the UDP-N-acetyl-alpha-D-glucosamine site. Residue histidine 362 is the Proton acceptor of the active site. Residues tyrosine 365 and asparagine 376 each coordinate UDP-N-acetyl-alpha-D-glucosamine. Acetyl-CoA contacts are provided by residues alanine 379, 385–386, serine 404, alanine 422, and arginine 439; that span reads NY.

It in the N-terminal section; belongs to the N-acetylglucosamine-1-phosphate uridyltransferase family. The protein in the C-terminal section; belongs to the transferase hexapeptide repeat family. In terms of assembly, homotrimer. Mg(2+) serves as cofactor.

It localises to the cytoplasm. It catalyses the reaction alpha-D-glucosamine 1-phosphate + acetyl-CoA = N-acetyl-alpha-D-glucosamine 1-phosphate + CoA + H(+). It carries out the reaction N-acetyl-alpha-D-glucosamine 1-phosphate + UTP + H(+) = UDP-N-acetyl-alpha-D-glucosamine + diphosphate. Its pathway is nucleotide-sugar biosynthesis; UDP-N-acetyl-alpha-D-glucosamine biosynthesis; N-acetyl-alpha-D-glucosamine 1-phosphate from alpha-D-glucosamine 6-phosphate (route II): step 2/2. It functions in the pathway nucleotide-sugar biosynthesis; UDP-N-acetyl-alpha-D-glucosamine biosynthesis; UDP-N-acetyl-alpha-D-glucosamine from N-acetyl-alpha-D-glucosamine 1-phosphate: step 1/1. It participates in bacterial outer membrane biogenesis; LPS lipid A biosynthesis. Catalyzes the last two sequential reactions in the de novo biosynthetic pathway for UDP-N-acetylglucosamine (UDP-GlcNAc). The C-terminal domain catalyzes the transfer of acetyl group from acetyl coenzyme A to glucosamine-1-phosphate (GlcN-1-P) to produce N-acetylglucosamine-1-phosphate (GlcNAc-1-P), which is converted into UDP-GlcNAc by the transfer of uridine 5-monophosphate (from uridine 5-triphosphate), a reaction catalyzed by the N-terminal domain. The sequence is that of Bifunctional protein GlmU from Thiobacillus denitrificans (strain ATCC 25259 / T1).